The primary structure comprises 413 residues: Glutamyl-tRNA reductase (413 aa).

Residues 57–60 (TCNR), serine 113, 118–120 (DFE), and glutamine 124 contribute to the substrate site. Catalysis depends on cysteine 58, which acts as the Nucleophile. 193 to 198 (GTGKIG) contacts NADP(+).

This sequence belongs to the glutamyl-tRNA reductase family. As to quaternary structure, homodimer.

It catalyses the reaction (S)-4-amino-5-oxopentanoate + tRNA(Glu) + NADP(+) = L-glutamyl-tRNA(Glu) + NADPH + H(+). Its pathway is porphyrin-containing compound metabolism; protoporphyrin-IX biosynthesis; 5-aminolevulinate from L-glutamyl-tRNA(Glu): step 1/2. Its function is as follows. Catalyzes the NADPH-dependent reduction of glutamyl-tRNA(Glu) to glutamate 1-semialdehyde (GSA). The chain is Glutamyl-tRNA reductase from Flavobacterium psychrophilum (strain ATCC 49511 / DSM 21280 / CIP 103535 / JIP02/86).